A 140-amino-acid polypeptide reads, in one-letter code: UPF0102 protein alr1796 (140 aa).

The protein belongs to the UPF0102 family.

This Nostoc sp. (strain PCC 7120 / SAG 25.82 / UTEX 2576) protein is UPF0102 protein alr1796.